The chain runs to 105 residues: UPF0473 protein SAG2089 (105 aa).

It belongs to the UPF0473 family.

This chain is UPF0473 protein SAG2089, found in Streptococcus agalactiae serotype V (strain ATCC BAA-611 / 2603 V/R).